The chain runs to 150 residues: Ribonuclease H (150 aa).

Residues 1–141 (MKSIEVHTDG…VDVLARNQAT (141 aa)) form the RNase H type-1 domain. 4 residues coordinate Mg(2+): Asp9, Glu47, Asp69, and Asp133.

Belongs to the RNase H family. In terms of assembly, monomer. Mg(2+) is required as a cofactor.

It is found in the cytoplasm. The enzyme catalyses Endonucleolytic cleavage to 5'-phosphomonoester.. Its function is as follows. Endonuclease that specifically degrades the RNA of RNA-DNA hybrids. This chain is Ribonuclease H, found in Xanthomonas oryzae pv. oryzae (strain MAFF 311018).